Consider the following 894-residue polypeptide: GTPase-activating protein GYP5 (894 aa).

A compositionally biased stretch (basic and acidic residues) spans Met-1 to Asn-23. The tract at residues Met-1–Lys-324 is disordered. A phosphoserine mark is found at Ser-25 and Ser-30. Residue Thr-89 is modified to Phosphothreonine. Positions Ile-134 to Thr-164 are enriched in basic and acidic residues. 2 stretches are compositionally biased toward polar residues: residues Gly-184 to Val-200 and Ser-268 to Thr-279. The residue at position 389 (Ser-389) is a Phosphoserine. One can recognise a Rab-GAP TBC domain in the interval Gly-451 to Gly-630. Residues Glu-732–Ser-872 are a coiled coil.

This sequence belongs to the GYP5 family. As to quaternary structure, interacts with GYL1 and RVS167; and is part of SEC4-containing complexes.

The protein localises to the cytoplasm. It localises to the bud. Its subcellular location is the bud neck. In terms of biological role, GTPase-activating protein which accelerates the GTP hydrolysis rate of YPT1 and SEC4. Involved in ER to Golgi trafficking and polarized exocytosis. This is GTPase-activating protein GYP5 (GYP5) from Saccharomyces cerevisiae (strain ATCC 204508 / S288c) (Baker's yeast).